The primary structure comprises 557 residues: Protein Red (557 aa).

The segment at 1 to 84 is disordered; it reads MPERDSEPFS…RKKKSYYAKL (84 aa). The span at 16–25 shows a compositional bias: basic and acidic residues; the sequence is DGHDVDDPHS. A compositionally biased stretch (low complexity) spans 42-53; the sequence is TPRAAPTSAPPS. N6-acetyllysine occurs at positions 98 and 137. Lys-151 is covalently cross-linked (Glycyl lysine isopeptide (Lys-Gly) (interchain with G-Cter in SUMO2)). The interval 181 to 205 is disordered; that stretch reads KEKEEEELMEKPQKETKKDEDPENK. A Phosphoserine modification is found at Ser-287. Residues 294 to 303 show a composition bias toward basic residues; sequence RNKKLKKKDK. The segment at 294–402 is disordered; that stretch reads RNKKLKKKDK…PIDVDKGPGS (109 aa). The span at 304-313 shows a compositional bias: basic and acidic residues; that stretch reads GKLEEKKPPE. Residues Lys-310 and Lys-331 each participate in a glycyl lysine isopeptide (Lys-Gly) (interchain with G-Cter in SUMO2) cross-link. A compositionally biased stretch (basic and acidic residues) spans 332 to 398; that stretch reads TPRDKERERY…VDDEPIDVDK (67 aa). 17 tandem repeats follow at residues 342–343, 344–345, 346–347, 348–349, 350–351, 352–353, 354–355, 356–357, 358–359, 360–361, 362–363, 364–365, 366–367, 368–369, 370–371, 372–373, and 374–375. The tract at residues 342 to 375 is 17 X 2 AA tandem repeats of R-[ED]; it reads RERERDRERDRDRDRERERERDRERERERDRERE. Glycyl lysine isopeptide (Lys-Gly) (interchain with G-Cter in SUMO2) cross-links involve residues Lys-386, Lys-388, Lys-404, and Lys-408. Phosphoserine occurs at positions 417 and 460. Position 485 is a phosphothreonine (Thr-485). Residues Lys-496, Lys-501, and Lys-509 each participate in a glycyl lysine isopeptide (Lys-Gly) (interchain with G-Cter in SUMO2) cross-link. Ser-536 carries the phosphoserine modification. Residues Lys-541, Lys-543, Lys-544, and Lys-553 each participate in a glycyl lysine isopeptide (Lys-Gly) (interchain with G-Cter in SUMO2) cross-link.

It belongs to the RED family. As to quaternary structure, component of the spliceosome B complex. Interacts with SMU1. Interacts with MAD1L1. May interact with DHX15.

Its subcellular location is the nucleus. The protein localises to the nucleoplasm. It localises to the chromosome. The protein resides in the cytoplasm. It is found in the cytoskeleton. Its subcellular location is the spindle pole. In terms of biological role, involved in pre-mRNA splicing as a component of the spliceosome. Auxiliary spliceosomal protein that regulates selection of alternative splice sites in a small set of target pre-mRNA species. Required for normal mitotic cell cycle progression. Recruits MAD1L1 and MAD2L1 to kinetochores, and is required to trigger the spindle assembly checkpoint. Required for normal accumulation of SMU1. The polypeptide is Protein Red (IK) (Pongo abelii (Sumatran orangutan)).